Here is a 430-residue protein sequence, read N- to C-terminus: Enolase (430 aa).

Gln163 provides a ligand contact to (2R)-2-phosphoglycerate. The Proton donor role is filled by Glu205. 3 residues coordinate Mg(2+): Asp242, Glu287, and Asp314. Positions 339, 368, 369, and 390 each coordinate (2R)-2-phosphoglycerate. Lys339 acts as the Proton acceptor in catalysis.

The protein belongs to the enolase family. It depends on Mg(2+) as a cofactor.

The protein resides in the cytoplasm. It is found in the secreted. The protein localises to the cell surface. It carries out the reaction (2R)-2-phosphoglycerate = phosphoenolpyruvate + H2O. It functions in the pathway carbohydrate degradation; glycolysis; pyruvate from D-glyceraldehyde 3-phosphate: step 4/5. Catalyzes the reversible conversion of 2-phosphoglycerate (2-PG) into phosphoenolpyruvate (PEP). It is essential for the degradation of carbohydrates via glycolysis. The protein is Enolase of Listeria innocua serovar 6a (strain ATCC BAA-680 / CLIP 11262).